Consider the following 243-residue polypeptide: Adenosylcobinamide-GDP ribazoletransferase (243 aa).

The next 7 membrane-spanning stretches (helical) occupy residues 8–28, 36–56, 58–78, 107–127, 131–151, 187–207, and 222–242; these read WLGA…PIQL, PWVG…LDFL, VPSP…TGGL, AGAF…TSLS, KGSV…WAIA, FLLP…LLIP, and YGAV…VGSA.

It belongs to the CobS family. It depends on Mg(2+) as a cofactor.

Its subcellular location is the cell inner membrane. The enzyme catalyses alpha-ribazole + adenosylcob(III)inamide-GDP = adenosylcob(III)alamin + GMP + H(+). It catalyses the reaction alpha-ribazole 5'-phosphate + adenosylcob(III)inamide-GDP = adenosylcob(III)alamin 5'-phosphate + GMP + H(+). Its pathway is cofactor biosynthesis; adenosylcobalamin biosynthesis; adenosylcobalamin from cob(II)yrinate a,c-diamide: step 7/7. Its function is as follows. Joins adenosylcobinamide-GDP and alpha-ribazole to generate adenosylcobalamin (Ado-cobalamin). Also synthesizes adenosylcobalamin 5'-phosphate from adenosylcobinamide-GDP and alpha-ribazole 5'-phosphate. The polypeptide is Adenosylcobinamide-GDP ribazoletransferase (Thermosynechococcus vestitus (strain NIES-2133 / IAM M-273 / BP-1)).